A 396-amino-acid polypeptide reads, in one-letter code: MIISAASDYRAAAQRILPPFLFHYMDGGAYSEYTLRRNVEDLSEVALRQRILKNMSDLSLETTLFNEKLSMPVALAPVGLCGMYARRGEVQAAKAADAHGIPFTLSTVSVCPIEEVAPAIKRPMWFQLYVLRDRGFMRNALERAKAAGCSTLVFTVDMPTPGARYRDAHSGMSGPNAAMRRYLQAVTHPQWAWDVGLNGRPHDLGNISAYLGKPTGLEDYIGWLGNNFDPSISWKDLEWIRDFWDGPMVIKGILDPEDARDAVRFGADGIVVSNHGGRQLDGVLSSARALPAIADAVKGDIAILADSGIRNGLDVVRMIALGADTVLLGRAFLYALATAGQAGVANLLNLIEKEMKVAMTLTGAKSISEITQDSLVQGLGKELPAALAPMAKGNAA.

Residues 1 to 380 (MIISAASDYR…TQDSLVQGLG (380 aa)) enclose the FMN hydroxy acid dehydrogenase domain. A substrate-binding site is contributed by Y24. Residues S106 and Q127 each coordinate FMN. Y129 serves as a coordination point for substrate. An FMN-binding site is contributed by T155. R164 lines the substrate pocket. K251 is a binding site for FMN. H275 functions as the Proton acceptor in the catalytic mechanism. R278 is a substrate binding site. Position 306-330 (306-330 (DSGIRNGLDVVRMIALGADTVLLGR)) interacts with FMN.

This sequence belongs to the FMN-dependent alpha-hydroxy acid dehydrogenase family. FMN serves as cofactor.

It is found in the cell inner membrane. It catalyses the reaction (S)-lactate + A = pyruvate + AH2. In terms of biological role, catalyzes the conversion of L-lactate to pyruvate. Is coupled to the respiratory chain. The polypeptide is L-lactate dehydrogenase (Shigella boydii serotype 18 (strain CDC 3083-94 / BS512)).